Reading from the N-terminus, the 422-residue chain is Protein krasavietz (422 aa).

Positions 1 to 26 (MSQKTERPVLSGQRIKTRKRDEREKY) are disordered. The W2 domain maps to 244–415 (KLHKAQASQE…QSAEEESESE (172 aa)). 3 positions are modified to phosphoserine: Ser407, Ser412, and Ser414.

Belongs to the BZW family. Expressed in mushroom bodies.

May be involved in memory formation. The chain is Protein krasavietz (kra) from Drosophila melanogaster (Fruit fly).